The sequence spans 903 residues: MLGFLKNFLDDNAREVKKLQRVVTAVNELEPRIEKLTDAELQAKTPALRERLEAGAPLDDLLPEAFAVVREVSRRVLDMRHFDVQIMGGVVLHQGKIAEMKTGEGKTLVATLPAYLNALTGRGVHIVTVNDYLAKRDSEWMGHIYRFLGLSTGLIVHGLDARQRQASYAADVIYGTNNEFGFDYLRDNMAMYPRDLVQRDLYYAIVDEVDSILIDEARTPLIISGQSGKPTDTYYTMARLVPKLKAETHFAVDEKARTVSLTEEGFARCEELLNIDNLSDPEHEEVLHHLNQALKAHALMKRDRDYVVKDGQVIIVDEFTGRLMFGRRYSDGLHQAIEAKEGVKIERESQTLATITFQNYFRMYEKLAGMTGTADTEAEEFKKIYGLDVVVVPTHKPMIREDLPDAVFKTEEGKFRAVVEEIAARHATGQPVLVGTISIEKSEVLSRMLTRRGIPHQVLNAKYHEKEAEIVAQAGRIGAVTIATNMAGRGTDIMLGGNPSFLALQEMRRRDYPPEVIAEAAEYGPCTEEVAEARRVYRELYAEFKKETDAEHDRVVALGGLFIIGTERHEARRIDNQLRGRCGRQGDPGATQFFVALNDDLLRLFGGDNIAGLMDRLKMDEDAPLEHPLISKSLETAQRRVENRNFSIRKHVLNYDDVINQQRELIYRQRRQVLCGEDLRPVVRQMMEEVAGQAVTAFAPEGVYPEEWNYEGLSEYMTQILPGEKWTVEDLEERLGKKRDDFRREDLRRLFLNEMEQAYAAREAELGAETMREIERVLMLRIVDEKWMDHLDAMDQLREGVGLRAYGQKDPLVEYKFESFDMFQNMIASIQEETVKKLFRVRVVPPQQAERRQVKENLYAAGGDGVKQPVRRDKKVGRNSPCPCGSGKKYKKCCAAKDEQAAG.

ATP is bound by residues Q85, 103–107, and D492; that span reads GEGKT. Positions 863–890 are disordered; the sequence is GDGVKQPVRRDKKVGRNSPCPCGSGKKY. Zn(2+) contacts are provided by C882, C884, C893, and C894.

Belongs to the SecA family. Monomer and homodimer. Part of the essential Sec protein translocation apparatus which comprises SecA, SecYEG and auxiliary proteins SecDF. Other proteins may also be involved. Zn(2+) is required as a cofactor.

The protein resides in the cell membrane. It is found in the cytoplasm. It catalyses the reaction ATP + H2O + cellular proteinSide 1 = ADP + phosphate + cellular proteinSide 2.. Part of the Sec protein translocase complex. Interacts with the SecYEG preprotein conducting channel. Has a central role in coupling the hydrolysis of ATP to the transfer of proteins into and across the cell membrane, serving as an ATP-driven molecular motor driving the stepwise translocation of polypeptide chains across the membrane. This chain is Protein translocase subunit SecA, found in Desulforudis audaxviator (strain MP104C).